Here is a 393-residue protein sequence, read N- to C-terminus: METFLFTSESVNEGHPDKLCDQISDAVLDACLAQDPDSKVACETCSKTNMVMVFGEITTKANVDYEKIVRDTCRTIGFVSDDVGLDADNCKVLVNIEQQSPDIAQGVHGHFTKRPEEIGAGDQGHMFGYATDETPELMPLSHVLATKLGARLTEVRKDGTCPWLRPDGKTQVTVEYYNDKGAMVPVRVHTVLISTQHDETVTNDEIAADLKEHVIKPVVPEKYLDEKTIFHLNPSGRFVIGGPHGDAGLTGRKIIIDTYGGWGAHGGGAFSGKDPTKVDRSGAYIVRQAAKSIVANGLARRCIVQVSYAIGVPDPLSVFVDSYGTGKIPDKEILKIVKENFDFRPGMITINLDLKRGGNDRFLKTAAYGHFGRDDPDFTWEIVKPLKWEKPQS.

Glu9 contacts Mg(2+). His15 lines the ATP pocket. Position 43 (Glu43) interacts with K(+). Glu56 and Gln99 together coordinate L-methionine. ATP-binding positions include 167 to 169, 235 to 238, Asp246, 252 to 253, Ala269, Lys273, and Lys277; these read DGK, SGRF, and RK. L-methionine is bound at residue Asp246. Position 277 (Lys277) interacts with L-methionine.

The protein belongs to the AdoMet synthase family. Homotetramer. It depends on Mn(2+) as a cofactor. Requires Mg(2+) as cofactor. Co(2+) serves as cofactor. The cofactor is K(+).

Its subcellular location is the cytoplasm. It carries out the reaction L-methionine + ATP + H2O = S-adenosyl-L-methionine + phosphate + diphosphate. It participates in amino-acid biosynthesis; S-adenosyl-L-methionine biosynthesis; S-adenosyl-L-methionine from L-methionine: step 1/1. In terms of biological role, catalyzes the formation of S-adenosylmethionine from methionine and ATP. The reaction comprises two steps that are both catalyzed by the same enzyme: formation of S-adenosylmethionine (AdoMet) and triphosphate, and subsequent hydrolysis of the triphosphate. The sequence is that of S-adenosylmethionine synthase 2 (SAMS2) from Elaeagnus umbellata (Autumn olive).